Consider the following 340-residue polypeptide: Ketol-acid reductoisomerase (NADP(+)) (340 aa).

Positions 1-182 constitute a KARI N-terminal Rossmann domain; it reads MTVTMQYEKD…GSARVGLLET (182 aa). Residues 26 to 29, Arg49, Ser53, and 83 to 86 contribute to the NADP(+) site; these read YGSQ and DEIQ. His108 is a catalytic residue. NADP(+) is bound at residue Gly134. Residues 183–328 enclose the KARI C-terminal knotted domain; the sequence is TFKEETEEDL…AELRKAMPFV (146 aa). Residues Asp191, Glu195, Glu227, and Glu231 each contribute to the Mg(2+) site. Ser252 contributes to the substrate binding site.

The protein belongs to the ketol-acid reductoisomerase family. Mg(2+) serves as cofactor.

The catalysed reaction is (2R)-2,3-dihydroxy-3-methylbutanoate + NADP(+) = (2S)-2-acetolactate + NADPH + H(+). It catalyses the reaction (2R,3R)-2,3-dihydroxy-3-methylpentanoate + NADP(+) = (S)-2-ethyl-2-hydroxy-3-oxobutanoate + NADPH + H(+). It functions in the pathway amino-acid biosynthesis; L-isoleucine biosynthesis; L-isoleucine from 2-oxobutanoate: step 2/4. It participates in amino-acid biosynthesis; L-valine biosynthesis; L-valine from pyruvate: step 2/4. In terms of biological role, involved in the biosynthesis of branched-chain amino acids (BCAA). Catalyzes an alkyl-migration followed by a ketol-acid reduction of (S)-2-acetolactate (S2AL) to yield (R)-2,3-dihydroxy-isovalerate. In the isomerase reaction, S2AL is rearranged via a Mg-dependent methyl migration to produce 3-hydroxy-3-methyl-2-ketobutyrate (HMKB). In the reductase reaction, this 2-ketoacid undergoes a metal-dependent reduction by NADPH to yield (R)-2,3-dihydroxy-isovalerate. In Streptococcus suis (strain 98HAH33), this protein is Ketol-acid reductoisomerase (NADP(+)).